The following is a 391-amino-acid chain: ETS-related transcription factor Elf-3 (391 aa).

One can recognise a PNT domain in the interval aspartate 65–serine 151. Residues tyrosine 200–arginine 271 form a disordered region. The segment covering proline 211–alanine 229 has biased composition (polar residues). The span at threonine 242–lysine 261 shows a compositional bias: basic and acidic residues. The span at histidine 262 to arginine 271 shows a compositional bias: basic residues. The ETS DNA-binding region spans threonine 293–glycine 375.

It belongs to the ETS family. Interacts with TBP. Interacts with CREBBP and EP300; these act as transcriptional coactivators of ELF3 and positively modulate its function. Interacts with XRCC5/KU86 and XRCC6/KU70; these inhibit the ability of ELF3 to bind DNA and negatively modulate its transcriptional activity. Associated with CLND7 and POU2F3. Interacts with ZNF768. Expressed in small intestine, colon, lung, kidney and uterus. Also expressed in the corneal epithelium and conjunctiva of the developing and adult eye. Not detected in liver, spleen, thymus, brain, heart, skeletal muscle or ovary.

The protein localises to the cytoplasm. It is found in the nucleus. Its function is as follows. Transcriptional activator that binds and transactivates ETS sequences containing the consensus nucleotide core sequence GGA[AT]. Acts synergistically with POU2F3 to transactivate the SPRR2A promoter and with RUNX1 to transactivate the ANGPT1 promoter. Also transactivates collagenase, CCL20, CLND7, FLG, KRT8, NOS2, PTGS2, SPRR2B, TGFBR2 and TGM3 promoters. Represses KRT4 promoter activity. Involved in mediating vascular inflammation. May play an important role in epithelial cell differentiation and tumorigenesis. May be a critical downstream effector of the ERBB2 signaling pathway. May be associated with mammary gland development and involution. Plays an important role in the regulation of transcription with TATA-less promoters in preimplantation embryos, which is essential in preimplantation development. The polypeptide is ETS-related transcription factor Elf-3 (Mus musculus (Mouse)).